A 77-amino-acid chain; its full sequence is Dermatoxin-A1 (77 aa).

The first 22 residues, 1-22 (MAFLKKSLFLVLFLGLVPLFLC), serve as a signal peptide directing secretion. A propeptide spanning residues 23–42 (ENEKREGENEKEENDDQSEE) is cleaved from the precursor. At Gln-76 the chain carries Glutamine amide.

The protein belongs to the frog skin active peptide (FSAP) family. Dermatoxin subfamily. In terms of tissue distribution, expressed by the skin glands.

It localises to the secreted. Its function is as follows. Possesses a potent antimicrobial activity against Gram-positive and Gram-negative bacteria. Probably acts by disturbing membrane functions with its amphipathic structure. The chain is Dermatoxin-A1 from Agalychnis annae (Blue-sided leaf frog).